The primary structure comprises 388 residues: Adenosine deaminase-like protein (388 aa).

The segment covering Met-1–Arg-13 has biased composition (basic residues). Residues Met-1–Asp-34 are disordered. Basic and acidic residues predominate over residues Arg-14–Asp-34. Zn(2+) is bound by residues His-65 and His-67. N(6)-methyl-AMP contacts are provided by residues His-67, His-114, Thr-146–Lys-149, Asp-186, and Gly-218. His-245 provides a ligand contact to Zn(2+). The N(6)-methyl-AMP site is built by Glu-248, Asp-326, and Asp-327. The active-site Proton donor is Glu-248. Residue Asp-326 coordinates Zn(2+).

The protein belongs to the metallo-dependent hydrolases superfamily. Adenosine and AMP deaminases family. Monomer. It depends on Zn(2+) as a cofactor.

It carries out the reaction N(6)-methyl-AMP + H2O + H(+) = IMP + methylamine. In terms of biological role, catalyzes the hydrolysis of the free cytosolic methylated adenosine nucleotide N(6)-methyl-AMP (N6-mAMP) to produce inositol monophosphate (IMP) and methylamine. Is required for the catabolism of cytosolic N6-mAMP, which is derived from the degradation of mRNA containing N6-methylated adenine (m6A). This Caenorhabditis elegans protein is Adenosine deaminase-like protein.